The sequence spans 192 residues: UPF0149 protein KPK_0755 (192 aa).

This sequence belongs to the UPF0149 family.

This is UPF0149 protein KPK_0755 from Klebsiella pneumoniae (strain 342).